The following is a 142-amino-acid chain: Arginine decarboxylase proenzyme (142 aa).

Serine 81 (schiff-base intermediate with substrate; via pyruvic acid) is an active-site residue. Position 81 is a pyruvic acid (Ser); by autocatalysis (serine 81). Histidine 86 functions as the Proton acceptor; for processing activity in the catalytic mechanism. The active-site Proton donor; for catalytic activity is the cysteine 101.

Belongs to the prokaryotic AdoMetDC family. Type 1 subfamily. As to quaternary structure, heterooctamer of four alpha and four beta chains arranged as a tetramer of alpha/beta heterodimers. Pyruvate is required as a cofactor. Is synthesized initially as an inactive proenzyme. Formation of the active enzyme involves a self-maturation process in which the active site pyruvoyl group is generated from an internal serine residue via an autocatalytic post-translational modification. Two non-identical subunits are generated from the proenzyme in this reaction, and the pyruvate is formed at the N-terminus of the alpha chain, which is derived from the carboxyl end of the proenzyme. The post-translation cleavage follows an unusual pathway, termed non-hydrolytic serinolysis, in which the side chain hydroxyl group of the serine supplies its oxygen atom to form the C-terminus of the beta chain, while the remainder of the serine residue undergoes an oxidative deamination to produce ammonia and the pyruvoyl group blocking the N-terminus of the alpha chain.

It carries out the reaction L-arginine + H(+) = agmatine + CO2. Its pathway is amine and polyamine biosynthesis; agmatine biosynthesis; agmatine from L-arginine: step 1/1. In terms of biological role, specifically catalyzes the decarboxylation of L-arginine to agmatine. Has no S-adenosylmethionine decarboxylase (AdoMetDC) activity. This is Arginine decarboxylase proenzyme from Hyperthermus butylicus (strain DSM 5456 / JCM 9403 / PLM1-5).